The following is a 1056-amino-acid chain: MLYRVSGFYKRHTRNFTNIDYGYYIRNFIHHIASKIYPYAKVVLPNFRAAHYFYILTLVILGSILVYPVKTCAYIDVLFFTAGASTQAGLNTVNVNDLSLYQQIVLYLLATLATPIFIHGSLLFVRLYYFERHFDNIKERSLMDYRMRKSATLARLGSAPTMSSTRLNTFNNQVLGFQEREAEKGSSSSPQSSSSQTSQPVSTAYNDQGGNDIEHHSEPSDSDDDESGNGPVTFQEKIHFEEPQRPRSQRRHSRTDSGIKFSALPHPRRRKSIDPEDMYRSINMLQEHKKNQEAKSKGIQFLNIGSPVRRKSRSSNIEAFPEEDTNPSRGDEITPATNSVGTGNNDEDEDDILIIKPPIEIENSDEANPIFTKKKKLASQIQFKETPGKAKKWITTKTRKHYNPWTSKLKKTLSNSSKKGSLSVVPTDTEDDSEDEEYASIDSETSDISDNEHAADNAEGSDVDSVGSYEEDEDEDEHNSDDDDDGEGERRLGNGASLTKAQSHLVLPSKDETGGKKYTKRSNTLDTPQQNTSDGRKIRKKAPKRKTPRTQRNASFNQHSNVSIGDGSIENVDTNDSYQRLSRTMSGNYLSWTPTVGRNSTFIKLTDEQKEELGGIEYRAVKLLIKIIVVYYVGFNIIPGVMLSIWIYCMPHYKNLMISSSISPAWWAFFTSQSSFNDLGLTLTSNSMMSFNQNAFVQILCSFLIVIGNTGFPILLRFIIWVMFKTARPLSLYKESLGFLLDHPRRCFTLLFPSVPTWWLFFILVVLNGFDLVIFCILDLHDDTFKGVDMGYRVLNGLFQAFCTRTVGFSVMDLSQLHAATQVSYLIMMYISVLPIAISVRRTNVYEEQSLGVYAKENAEGVDESAPSNYVGSHLRNQLSYDLWYICLGLFIICIAEGKRLKEQDLRFSIFAVLFEIVSAYGTVGMSMGYPGVDCSLSGEFNVISKLVIIAMMIRGRHRGLPYTIDRAIMLPNAAMKRHDRLQEEHAINRHNTMERTTTLGRVATFGNGPIDGGNNLLTRAITNIEHRLRNRRDGRSESSTVSEDPRYVVRTVSEV.

Over 1–46 (MLYRVSGFYKRHTRNFTNIDYGYYIRNFIHHIASKIYPYAKVVLPN) the chain is Cytoplasmic. The helical transmembrane segment at 47–67 (FRAAHYFYILTLVILGSILVY) threads the bilayer. The Extracellular segment spans residues 68 to 73 (PVKTCA). An intramembrane segment occupies 74-90 (YIDVLFFTAGASTQAGL). Over 91–99 (NTVNVNDLS) the chain is Extracellular. The chain crosses the membrane as a helical span at residues 100–122 (LYQQIVLYLLATLATPIFIHGSL). The Cytoplasmic portion of the chain corresponds to 123 to 622 (LFVRLYYFER…LGGIEYRAVK (500 aa)). Disordered regions lie at residues 180 to 276 (REAE…IDPE), 290 to 350 (KNQE…EDED), and 404 to 571 (PWTS…SIEN). A compositionally biased stretch (low complexity) spans 186 to 203 (SSSSPQSSSSQTSQPVST). The span at 236–245 (EKIHFEEPQR) shows a compositional bias: basic and acidic residues. The span at 335–344 (PATNSVGTGN) shows a compositional bias: polar residues. Over residues 412 to 423 (TLSNSSKKGSLS) the composition is skewed to low complexity. 2 stretches are compositionally biased toward acidic residues: residues 428–449 (DTED…SDIS) and 469–487 (YEED…DDGE). Residues 521–533 (RSNTLDTPQQNTS) are compositionally biased toward polar residues. Residues 537–549 (KIRKKAPKRKTPR) are compositionally biased toward basic residues. Over residues 553 to 563 (NASFNQHSNVS) the composition is skewed to polar residues. Residues 623-646 (LLIKIIVVYYVGFNIIPGVMLSIW) traverse the membrane as a helical segment. At 647-665 (IYCMPHYKNLMISSSISPA) the chain is on the extracellular side. The stretch at 666 to 682 (WWAFFTSQSSFNDLGLT) is an intramembrane region. Residues 683 to 693 (LTSNSMMSFNQ) lie on the Extracellular side of the membrane. A helical membrane pass occupies residues 694-710 (NAFVQILCSFLIVIGNT). Over 711-754 (GFPILLRFIIWVMFKTARPLSLYKESLGFLLDHPRRCFTLLFPS) the chain is Cytoplasmic. Residues 755-778 (VPTWWLFFILVVLNGFDLVIFCIL) form a helical membrane-spanning segment. At 779 to 793 (DLHDDTFKGVDMGYR) the chain is on the extracellular side. An intramembrane segment occupies 794–810 (VLNGLFQAFCTRTVGFS). The Extracellular segment spans residues 811–817 (VMDLSQL). A helical transmembrane segment spans residues 818–841 (HAATQVSYLIMMYISVLPIAISVR). The Cytoplasmic segment spans residues 842–874 (RTNVYEEQSLGVYAKENAEGVDESAPSNYVGSH). The chain crosses the membrane as a helical span at residues 875–896 (LRNQLSYDLWYICLGLFIICIA). Over 897 to 909 (EGKRLKEQDLRFS) the chain is Extracellular. Residues 910–928 (IFAVLFEIVSAYGTVGMSM) lie within the membrane without spanning it. Over 929-942 (GYPGVDCSLSGEFN) the chain is Extracellular. The chain crosses the membrane as a helical span at residues 943–965 (VISKLVIIAMMIRGRHRGLPYTI). Over 966–1056 (DRAIMLPNAA…RYVVRTVSEV (91 aa)) the chain is Cytoplasmic.

This sequence belongs to the TrkH potassium transport family.

The protein localises to the cell membrane. It catalyses the reaction K(+)(in) = K(+)(out). The catalysed reaction is chloride(in) = chloride(out). TRK1-mediated chloride conductance is blocked by 4,4'-diisothiocyanatostilbene-2,2'-disulfonic acid. Potassium transporter that mediates K(+) influx, as well as Cl(-) efflux as a secondary function. TRK1 is the major K(+) uptake transporter that regulates membrane potential and intracellular pH. The TRK1-mediated Cl(-) efflux should serve as a Cl(-) detoxification route and may play a role in sustaining C.albicans on mammalian epithelial surfaces, or in physiological saline solutions such as saliva. Its function is as follows. Mediates candidacidal activities of cysteine-free peptides, but not of defensins. The hallmark of salivary gland-secreted histatin-5 (Hst 5) killing of C.albicans is the rapid efflux of cellular ATP and other small nucleotides and ions from the cell as well as concurrent intracellular uptake of propidium iodide (PI). TRK1 is the channel for Hst 5-induced killing and histatin-5 may directly or indirectly alter TRK1 function, allowing the efflux of larger anions, including ATP, and the influx of small cationic dyes, such as PI. This is Potassium transporter TRK1 from Candida albicans (strain SC5314 / ATCC MYA-2876) (Yeast).